A 176-amino-acid chain; its full sequence is Inner membrane protein p54 (176 aa).

Residues 32-52 (YTILIAIVVLIIIIIVLIYLF) traverse the membrane as a helical segment. Positions 82–176 (VTPQPGIAKP…YTHKDLENSL (95 aa)) are disordered. Positions 123–154 (GMAAGGPAAASAPAHPAELYTTATTQNTASQT) are enriched in low complexity. Positions 142–154 (YTTATTQNTASQT) are interaction with host DYNLL1.

The protein belongs to the asfivirus envelope protein p54 family. As to quaternary structure, interacts with the host light chain cytoplasmic dynein DYNLL1; this interaction is critical for intracellular microtubule-dependent virus transport toward viral factories.

It localises to the virion membrane. The protein localises to the host cytoplasm. Its subcellular location is the host cytoskeleton. It is found in the host endoplasmic reticulum membrane. Inner envelope protein involved, through its interaction with host dynein, in the intracellular microtubule-dependent transport of viral capsid toward viral factories. Seems to induce caspase-3 activation and apoptosis. Plays a role in virion morphogenesis by recruiting and transforming the host ER membranes into the precursors of the viral envelope. Involved in virus attachment to the host cell. The chain is Inner membrane protein p54 from African swine fever virus (isolate Tick/Malawi/Lil 20-1/1983) (ASFV).